We begin with the raw amino-acid sequence, 62 residues long: UPF0434 protein RL4569 (62 aa).

It belongs to the UPF0434 family.

In Rhizobium johnstonii (strain DSM 114642 / LMG 32736 / 3841) (Rhizobium leguminosarum bv. viciae), this protein is UPF0434 protein RL4569.